The sequence spans 121 residues: Large ribosomal subunit protein bL12 (121 aa).

Belongs to the bacterial ribosomal protein bL12 family. As to quaternary structure, homodimer. Part of the ribosomal stalk of the 50S ribosomal subunit. Forms a multimeric L10(L12)X complex, where L10 forms an elongated spine to which 2 to 4 L12 dimers bind in a sequential fashion. Binds GTP-bound translation factors.

Forms part of the ribosomal stalk which helps the ribosome interact with GTP-bound translation factors. Is thus essential for accurate translation. The sequence is that of Large ribosomal subunit protein bL12 from Shigella sonnei (strain Ss046).